Consider the following 396-residue polypeptide: Ribosomal RNA large subunit methyltransferase I (396 aa).

The PUA domain maps to serine 2 to arginine 81.

The protein belongs to the methyltransferase superfamily. RlmI family.

It localises to the cytoplasm. The catalysed reaction is cytidine(1962) in 23S rRNA + S-adenosyl-L-methionine = 5-methylcytidine(1962) in 23S rRNA + S-adenosyl-L-homocysteine + H(+). Specifically methylates the cytosine at position 1962 (m5C1962) of 23S rRNA. The chain is Ribosomal RNA large subunit methyltransferase I from Cronobacter sakazakii (strain ATCC BAA-894) (Enterobacter sakazakii).